Reading from the N-terminus, the 628-residue chain is 1-deoxy-D-xylulose-5-phosphate synthase (628 aa).

Thiamine diphosphate contacts are provided by residues His72 and Gly113–Ser115. Asp144 contributes to the Mg(2+) binding site. Thiamine diphosphate contacts are provided by residues Gly145 to Ala146, Asn173, Tyr284, and Glu367. Asn173 lines the Mg(2+) pocket.

Belongs to the transketolase family. DXPS subfamily. Homodimer. The cofactor is Mg(2+). Thiamine diphosphate serves as cofactor.

It carries out the reaction D-glyceraldehyde 3-phosphate + pyruvate + H(+) = 1-deoxy-D-xylulose 5-phosphate + CO2. Its pathway is metabolic intermediate biosynthesis; 1-deoxy-D-xylulose 5-phosphate biosynthesis; 1-deoxy-D-xylulose 5-phosphate from D-glyceraldehyde 3-phosphate and pyruvate: step 1/1. Its function is as follows. Catalyzes the acyloin condensation reaction between C atoms 2 and 3 of pyruvate and glyceraldehyde 3-phosphate to yield 1-deoxy-D-xylulose-5-phosphate (DXP). The sequence is that of 1-deoxy-D-xylulose-5-phosphate synthase from Exiguobacterium sibiricum (strain DSM 17290 / CCUG 55495 / CIP 109462 / JCM 13490 / 255-15).